A 313-amino-acid chain; its full sequence is 4-diphosphocytidyl-2-C-methyl-D-erythritol kinase (313 aa).

K29 is a catalytic residue. 113 to 123 (PMGGGVGGGSS) serves as a coordination point for ATP. Residue D155 is part of the active site.

This sequence belongs to the GHMP kinase family. IspE subfamily.

The enzyme catalyses 4-CDP-2-C-methyl-D-erythritol + ATP = 4-CDP-2-C-methyl-D-erythritol 2-phosphate + ADP + H(+). It functions in the pathway isoprenoid biosynthesis; isopentenyl diphosphate biosynthesis via DXP pathway; isopentenyl diphosphate from 1-deoxy-D-xylulose 5-phosphate: step 3/6. In terms of biological role, catalyzes the phosphorylation of the position 2 hydroxy group of 4-diphosphocytidyl-2C-methyl-D-erythritol. This Haemophilus influenzae (strain 86-028NP) protein is 4-diphosphocytidyl-2-C-methyl-D-erythritol kinase.